Here is a 344-residue protein sequence, read N- to C-terminus: Dihydroorotase (344 aa).

Residues H14 and H16 each contribute to the Zn(2+) site. Residues 16 to 18 (HFR) and N42 each bind substrate. Residues K100, H137, and H175 each contribute to the Zn(2+) site. K100 is subject to N6-carboxylysine. Substrate is bound at residue H137. Position 220 (L220) interacts with substrate. D248 serves as a coordination point for Zn(2+). Residue D248 is part of the active site. Substrate-binding residues include H252 and A264.

The protein belongs to the metallo-dependent hydrolases superfamily. DHOase family. Class II DHOase subfamily. As to quaternary structure, homodimer. Requires Zn(2+) as cofactor.

It catalyses the reaction (S)-dihydroorotate + H2O = N-carbamoyl-L-aspartate + H(+). It participates in pyrimidine metabolism; UMP biosynthesis via de novo pathway; (S)-dihydroorotate from bicarbonate: step 3/3. Functionally, catalyzes the reversible cyclization of carbamoyl aspartate to dihydroorotate. The chain is Dihydroorotase from Erythrobacter litoralis (strain HTCC2594).